A 114-amino-acid chain; its full sequence is Transcription initiation factor IIA subunit 2 (114 aa).

The protein belongs to the TFIIA subunit 2 family. TFIIA is a heterodimer composed of the large toa1 and the small toa2 subunits.

It localises to the nucleus. Functionally, TFIIA is a component of the transcription machinery of RNA polymerase II and plays an important role in transcriptional activation. TFIIA in a complex with tbp mediates transcriptional activity. The polypeptide is Transcription initiation factor IIA subunit 2 (toa2) (Fusarium vanettenii (strain ATCC MYA-4622 / CBS 123669 / FGSC 9596 / NRRL 45880 / 77-13-4) (Fusarium solani subsp. pisi)).